The chain runs to 360 residues: Blue-light-activated histidine kinase 1 (360 aa).

Positions 38–109 (LFLETTQQTR…KLREGIAAER (72 aa)) constitute a PAS domain. Cys-85 carries the post-translational modification S-4a-FMN cysteine. The 55-residue stretch at 109–163 (RYTVVDLLNYRKDGIPFWNAVHVGPIYGEDGTLQYFYGSQWDITDIVAERRKAET) folds into the PAC domain. Residue His-173 is modified to Phosphohistidine; by autocatalysis. The HWE histidine kinase domain stretch occupies residues 260 to 303 (RSVTALGLALHELATNAVKYGALSVDAGRVEISWSREDGDVTLV).

In terms of processing, FMN binds covalently to cysteine after exposure to blue light and this bond is spontaneously broken in the dark.

It carries out the reaction ATP + protein L-histidine = ADP + protein N-phospho-L-histidine.. Photosensitive kinase that is involved in increased bacterial virulence upon exposure to light. In Erythrobacter litoralis (strain HTCC2594), this protein is Blue-light-activated histidine kinase 1.